Here is a 398-residue protein sequence, read N- to C-terminus: CCA-adding enzyme (398 aa).

Residues Gly-32 and Arg-35 each contribute to the ATP site. Positions 32 and 35 each coordinate CTP. Mg(2+)-binding residues include Asp-45 and Asp-47. Residues Arg-116, Asp-159, Arg-162, Arg-165, and Arg-168 each contribute to the ATP site. CTP contacts are provided by Arg-116, Asp-159, Arg-162, Arg-165, and Arg-168.

This sequence belongs to the tRNA nucleotidyltransferase/poly(A) polymerase family. Bacterial CCA-adding enzyme type 3 subfamily. As to quaternary structure, homodimer. Mg(2+) is required as a cofactor.

The catalysed reaction is a tRNA precursor + 2 CTP + ATP = a tRNA with a 3' CCA end + 3 diphosphate. It catalyses the reaction a tRNA with a 3' CCA end + 2 CTP + ATP = a tRNA with a 3' CCACCA end + 3 diphosphate. In terms of biological role, catalyzes the addition and repair of the essential 3'-terminal CCA sequence in tRNAs without using a nucleic acid template. Adds these three nucleotides in the order of C, C, and A to the tRNA nucleotide-73, using CTP and ATP as substrates and producing inorganic pyrophosphate. tRNA 3'-terminal CCA addition is required both for tRNA processing and repair. Also involved in tRNA surveillance by mediating tandem CCA addition to generate a CCACCA at the 3' terminus of unstable tRNAs. While stable tRNAs receive only 3'-terminal CCA, unstable tRNAs are marked with CCACCA and rapidly degraded. In Lacticaseibacillus paracasei (strain ATCC 334 / BCRC 17002 / CCUG 31169 / CIP 107868 / KCTC 3260 / NRRL B-441) (Lactobacillus paracasei), this protein is CCA-adding enzyme.